The chain runs to 354 residues: Glycerol-1-phosphate dehydrogenase [NAD(P)+] (354 aa).

Residues 103-107 (GRAVD) and 125-128 (TAAS) contribute to the NAD(+) site. D130 contributes to the substrate binding site. S134 is a binding site for NAD(+). D176 provides a ligand contact to substrate. Positions 176 and 255 each coordinate Zn(2+). Residue H259 coordinates substrate. Zn(2+) is bound at residue H271.

The protein belongs to the glycerol-1-phosphate dehydrogenase family. As to quaternary structure, homodimer. Requires Zn(2+) as cofactor.

It localises to the cytoplasm. The catalysed reaction is sn-glycerol 1-phosphate + NAD(+) = dihydroxyacetone phosphate + NADH + H(+). The enzyme catalyses sn-glycerol 1-phosphate + NADP(+) = dihydroxyacetone phosphate + NADPH + H(+). It participates in membrane lipid metabolism; glycerophospholipid metabolism. In terms of biological role, catalyzes the NAD(P)H-dependent reduction of dihydroxyacetonephosphate (DHAP or glycerone phosphate) to glycerol 1-phosphate (G1P). The G1P thus generated is used as the glycerophosphate backbone of phospholipids in the cellular membranes of Archaea. The polypeptide is Glycerol-1-phosphate dehydrogenase [NAD(P)+] (Cenarchaeum symbiosum (strain A)).